A 127-amino-acid chain; its full sequence is Large ribosomal subunit protein uL22 (127 aa).

It belongs to the universal ribosomal protein uL22 family. In terms of assembly, part of the 50S ribosomal subunit.

In terms of biological role, this protein binds specifically to 23S rRNA; its binding is stimulated by other ribosomal proteins, e.g. L4, L17, and L20. It is important during the early stages of 50S assembly. It makes multiple contacts with different domains of the 23S rRNA in the assembled 50S subunit and ribosome. Functionally, the globular domain of the protein is located near the polypeptide exit tunnel on the outside of the subunit, while an extended beta-hairpin is found that lines the wall of the exit tunnel in the center of the 70S ribosome. The protein is Large ribosomal subunit protein uL22 of Methylobacterium sp. (strain 4-46).